Reading from the N-terminus, the 193-residue chain is MWLIAGLGNPGLQYQNNRHNIGFMVIDAIYQSFSFSPWSKKFQAEISNGLIDGEKTFLIKPQTFMNLSGQAIGEVLRFYKLDLKNFIVICDELDLPPGKVRVKTAGGNNGHNGIKSIDAHCGTDYCRVRLGIGHPGSKELVHQHVLGNFTKSDQEWLSPLLDAIAKNIALLIKGDRCLFMDTISQATKNKNLQ.

Residue Tyr-14 coordinates tRNA. His-19 (proton acceptor) is an active-site residue. Positions 64, 66, and 112 each coordinate tRNA.

The protein belongs to the PTH family. As to quaternary structure, monomer.

The protein localises to the cytoplasm. It carries out the reaction an N-acyl-L-alpha-aminoacyl-tRNA + H2O = an N-acyl-L-amino acid + a tRNA + H(+). Functionally, hydrolyzes ribosome-free peptidyl-tRNAs (with 1 or more amino acids incorporated), which drop off the ribosome during protein synthesis, or as a result of ribosome stalling. Catalyzes the release of premature peptidyl moieties from peptidyl-tRNA molecules trapped in stalled 50S ribosomal subunits, and thus maintains levels of free tRNAs and 50S ribosomes. The sequence is that of Peptidyl-tRNA hydrolase from Bartonella quintana (strain Toulouse) (Rochalimaea quintana).